The primary structure comprises 702 residues: MPSDILVVAALGRPFTLGALYDARKDKLYPGFTLWEHEVLEESTVESDQPSSTFEITASDSIDDKSSLMDIEASLKASFLGGLIEVGGSAKYLNDTKKFKNQSRVTLQYKATTSFKQLMTNLETKHVEYSEYFQNIEATHVVIGILYGANAFFVFDSDKVDSSNVQDIQGSMEAVIKKIPSVEISGQGSVQLTSEESDITNSFSCKFHGDFHLPSNPTTFEDAVKTYQQLPQMMGKETAVPMTVWLVPMTNFYSEAPQLMADSSTPILRKVRNTLEAMRQLDMRCNDSLERRHSEAGFHCLKKKLKTFQKHYERLHVNPFRKNHFPETFSPSGKGTKMKLQCLPTFRNKLRSPSNINSLNMWMDCAEREINVLRSCIDIIEEAKHKVVLSKSQMARELDDSEVKHAVCYVFTYVTDYDPFLNALSDFSKSIKPKKYSPSKKDYWYTSDDVPEMMREKAHHFYNLAKDMENRCVRFLVASIVNPKEEGAAIHYYREGIQIINDFSNPRIPPVETIQDQESYSGMTVSSPWKETAHPALHLSEGNKKAMSGKPQPSDNNPKRFDHYQQVLCNKGLSKRHYWEVEWCGYVRAGITYKGIQRKTFASECSLGHTDMSWVFDYYPKSGYHHIYNNKKVRVKVASPGFDRLGVYLDWPAGTLSFYMVTSTWVTHLHTFSIRFNEAVYPAFLIGHGQKNANGQIKLKGE.

A structural MACPF/CDC pore-forming domain region spans residues 2–264; sequence PSDILVVAAL…EAPQLMADSS (263 aa). N-linked (GlcNAc...) asparagine glycosylation is found at N94, N101, and N286. Residues 265–387 form a structural FAT domain region; it reads TPILRKVRNT…DIIEEAKHKV (123 aa). A thioredoxin (THX) domain region spans residues 388 to 515; it reads VLSKSQMARE…PRIPPVETIQ (128 aa). A B30.2/SPRY domain is found at 504 to 702; the sequence is SNPRIPPVET…ANGQIKLKGE (199 aa).

It belongs to the SNTX/VTX toxin family. In terms of assembly, heterodimer of alpha and beta subunits; non-covalently linked. Also associates into tetramers or even higher aggregates. Post-translationally, intrachain disulfide bonds may be present in the heterodimer. Expressed by the venom gland.

The protein resides in the secreted. Its function is as follows. This heterodimer induces potent hemolytic activities (when tested on rabbit erythrocytes, EC(50)=25-56 ng/mL) due to its ability to form pores in the cell membrane. The pore may be composed of 10 alpha/beta heterodimers. The toxin shows cardiovascular effects that include a vasorelaxant action that may involve the L-arginine-nitric oxid synthase pathway. In addition, it displays edema-inducing activities, increases vascular permeability. It also shows myotoxic activities and interferes irreversibly with neuromuscular function. It also induces irreversible platelet aggregation in rabbit or rat (but not in human or mouse) whole blood. In addition, it has been observed to increase spontaneous quantal acetylcholine release from isolated frog cutaneous pectoris motor endings. The protein is Cytolytic toxin-beta of Scorpaena plumieri (Spotted scorpionfish).